A 417-amino-acid chain; its full sequence is Serine hydroxymethyltransferase (417 aa).

Lys-54 bears the N6-acetyllysine mark. Residues Leu-121 and 125–127 (GHL) contribute to the (6S)-5,6,7,8-tetrahydrofolate site. Lys-229 bears the N6-(pyridoxal phosphate)lysine mark. Residues Lys-250, Lys-285, and Lys-354 each carry the N6-acetyllysine modification. Residue 355–357 (SPF) coordinates (6S)-5,6,7,8-tetrahydrofolate. Lys-375 bears the N6-acetyllysine mark.

Belongs to the SHMT family. Homodimer. Pyridoxal 5'-phosphate is required as a cofactor.

The protein localises to the cytoplasm. It carries out the reaction (6R)-5,10-methylene-5,6,7,8-tetrahydrofolate + glycine + H2O = (6S)-5,6,7,8-tetrahydrofolate + L-serine. The protein operates within one-carbon metabolism; tetrahydrofolate interconversion. It functions in the pathway amino-acid biosynthesis; glycine biosynthesis; glycine from L-serine: step 1/1. Its function is as follows. Catalyzes the reversible interconversion of serine and glycine with tetrahydrofolate (THF) serving as the one-carbon carrier. This reaction serves as the major source of one-carbon groups required for the biosynthesis of purines, thymidylate, methionine, and other important biomolecules. Also exhibits THF-independent aldolase activity toward beta-hydroxyamino acids, producing glycine and aldehydes, via a retro-aldol mechanism. This Escherichia coli O17:K52:H18 (strain UMN026 / ExPEC) protein is Serine hydroxymethyltransferase.